A 334-amino-acid polypeptide reads, in one-letter code: MTESVVCTGAVSTVKEVWEERIKKHHEDVKREKEFQQKLVRIWEDRVSLTKLKEKVTREDGRIILRIEKEEWKTLPSSLLKLNQLQEWQLHRTGLLKIPEFIGRFQHLIVLDLSRNTISEIPRGIGLLTRLQELILSYNKIKTVPKELSNCASLEKLELAVNRDISDLPTELSKLLKLTHLDLSMNQFTTIPLAVLDMPALEWLDMGSNSLQQLPDTLDRMQSLHTLWLQRNEITCLPETIRNMKNLGTLVLSNNKLQDIPGCMEEMTSLRFVNFRDNPLRLEVTLPPSDDVDGEEEQELFGLQFMHAYIQESRRTEDQVNCLTHTPSSTRSDG.

LRR repeat units lie at residues 59–82 (EDGR…LLKL), 83–105 (NQLQ…IGRF), 106–128 (QHLI…IGLL), 129–151 (TRLQ…LSNC), 153–175 (SLEK…LSKL), 176–198 (LKLT…VLDM), 199–221 (PALE…LDRM), 223–244 (SLHT…IRNM), 245–269 (KNLG…EMTS), and 272–295 (FVNF…VDGE).

Interacts with MYH7 (via C-terminus). In terms of tissue distribution, expressed in heart and skeletal muscle (at protein level). Also detected in kidney (at protein level). Not detected in other tissues tested (at protein level).

It localises to the cytoplasm. Its subcellular location is the myofibril. It is found in the sarcomere. The protein localises to the m line. In terms of biological role, component of the sarcomeric M-band which plays a role in myocyte response to biomechanical stress. May regulate expression of other M-band proteins via an SRF-dependent pathway. Important for normal contractile function in heart. This is Leucine-rich repeat-containing protein 39 from Rattus norvegicus (Rat).